Reading from the N-terminus, the 845-residue chain is ATP-binding cassette sub-family F member 1 (845 aa).

Residues 1–261 (MPKAPKQQPP…HLSKKEKKKL (261 aa)) form a disordered region. Residues S22 and S24 each carry the phosphoserine modification. A compositionally biased stretch (basic residues) spans 29-39 (KKGKKDKKIKK). Positions 47-64 (VEDKQAGEEEKVLKEKEQ) are enriched in basic and acidic residues. Over residues 73-85 (QKKKRDTRKGRRK) the composition is skewed to basic residues. At S105 the chain carries Phosphoserine. T108 carries the post-translational modification Phosphothreonine. Residues S109 and S140 each carry the phosphoserine; by CK2 modification. Basic and acidic residues predominate over residues 147 to 160 (EKHPPKPAKPEKNR). S166 is subject to Phosphoserine. Basic and acidic residues predominate over residues 206-226 (EIIKEKEPPKQGKEKAKKAEQ). A compositionally biased stretch (acidic residues) spans 227–241 (GSEEEGEGEEEEEEG). S228 bears the Phosphoserine mark. The region spanning 304-548 (IKLEKFSISA…MYQQKQKELL (245 aa)) is the ABC transporter 1 domain. 336 to 343 (GPNGKGKT) provides a ligand contact to ATP. The segment covering 559 to 580 (KELKAGGKSTKQAEKQTKEALT) has biased composition (basic and acidic residues). Positions 559 to 602 (KELKAGGKSTKQAEKQTKEALTRKQQKCRRKNQDEESQEAPELL) are disordered. S595 bears the Phosphoserine mark. Positions 625–840 (LGLHGVTFGY…VLEALGEVMV (216 aa)) constitute an ABC transporter 2 domain. An ATP-binding site is contributed by 658–665 (GPNGVGKS).

The protein belongs to the ABC transporter superfamily. ABCF family. EF3 subfamily. Isoform 2 interacts (via N-terminus) with EIF2S1; the interaction is independent of its phosphorylated status. Isoform 2 associates (via both ABC transporter domains) with the ribosomes. Post-translationally, isoform 2 is phosphorylated at phosphoserine and phosphothreonine. Isoform 2 phosphorylation on Ser-109 and Ser-140 by CK2 inhibits association of EIF2 with ribosomes. Ubiquitous.

Its subcellular location is the cytoplasm. It is found in the nucleus. The protein localises to the nucleoplasm. It localises to the nucleus envelope. In terms of biological role, isoform 2 is required for efficient Cap- and IRES-mediated mRNA translation initiation. Isoform 2 is not involved in the ribosome biogenesis. The protein is ATP-binding cassette sub-family F member 1 (ABCF1) of Homo sapiens (Human).